Here is a 157-residue protein sequence, read N- to C-terminus: Large ribosomal subunit protein mL59 (157 aa).

Belongs to the mitochondrion-specific ribosomal protein mL59 family. As to quaternary structure, component of the mitochondrial large ribosomal subunit (mt-LSU). Mature yeast 74S mitochondrial ribosomes consist of a small (37S) and a large (54S) subunit. The 37S small subunit contains a 15S ribosomal RNA (15S mt-rRNA) and 34 different proteins. The 54S large subunit contains a 21S rRNA (21S mt-rRNA) and 46 different proteins.

The protein localises to the mitochondrion. Functionally, component of the mitochondrial ribosome (mitoribosome), a dedicated translation machinery responsible for the synthesis of mitochondrial genome-encoded proteins, including at least some of the essential transmembrane subunits of the mitochondrial respiratory chain. The mitoribosomes are attached to the mitochondrial inner membrane and translation products are cotranslationally integrated into the membrane. This chain is Large ribosomal subunit protein mL59 (MRPL25), found in Saccharomyces cerevisiae (strain ATCC 204508 / S288c) (Baker's yeast).